A 354-amino-acid chain; its full sequence is MTSNKIKVLCVDDSALIRDLMSKIIDSQPDMEVVATAPDPLVARDLIKRTNPDVLTLDVEMPRMDGLDFLERLMRLRPMPVLMVSSLTQKGSEITLRALELGAVDFVAKPEMGIREGMLEYTEMIADMIRAAARSRPRAVAKQPPAKDKAPLKAPLLSSEKVIIIGASTGGTEAIRHVLEPLPANSPAVLITQHMPGGFTKSFAERLDKLCRISVKEAVDGERVLPGHAYIAPGDWHMKLARSGANYVIRLDDAPPVNRHRPSVDVLFHSAAQSAGRNAIGVILTGMGRDGAAGLLEMRQAGSYTLAQDEESCVVFGMPREAIVAGAAIDTIALSEIPAALMKRAEASGRAQRV.

The Response regulatory domain occupies 7–124 (KVLCVDDSAL…REGMLEYTEM (118 aa)). Aspartate 58 is subject to 4-aspartylphosphate. The 193-residue stretch at 156-348 (LLSSEKVIII…AALMKRAEAS (193 aa)) folds into the CheB-type methylesterase domain. Residues serine 168, histidine 194, and aspartate 290 contribute to the active site.

It belongs to the CheB family. Post-translationally, phosphorylated by CheA. Phosphorylation of the N-terminal regulatory domain activates the methylesterase activity.

Its subcellular location is the cytoplasm. The enzyme catalyses [protein]-L-glutamate 5-O-methyl ester + H2O = L-glutamyl-[protein] + methanol + H(+). It carries out the reaction L-glutaminyl-[protein] + H2O = L-glutamyl-[protein] + NH4(+). Functionally, involved in chemotaxis. Part of a chemotaxis signal transduction system that modulates chemotaxis in response to various stimuli. Catalyzes the demethylation of specific methylglutamate residues introduced into the chemoreceptors (methyl-accepting chemotaxis proteins or MCP) by CheR. Also mediates the irreversible deamidation of specific glutamine residues to glutamic acid. The protein is Protein-glutamate methylesterase/protein-glutamine glutaminase of Chromohalobacter salexigens (strain ATCC BAA-138 / DSM 3043 / CIP 106854 / NCIMB 13768 / 1H11).